Consider the following 129-residue polypeptide: Phenazine antibiotic resistance protein EhpR (129 aa).

Positions Thr-10–Leu-128 constitute a VOC domain. Residues Arg-42–Tyr-43 and Trp-57 each bind D-alanylgriseoluteate.

Homodimer.

In terms of biological role, required for resistance to the phenazine antibiotic D-alanylgriseoluteic acid (AGA), an antibiotic produced by E.agglomerans itself, and thus protects the bacterium against phenazine toxicity. Probably binds AGA and acts as a chaperone that works in tandem with a membrane transporter for subsequent antibiotic secretion. This is Phenazine antibiotic resistance protein EhpR from Enterobacter agglomerans (Erwinia herbicola).